A 205-amino-acid polypeptide reads, in one-letter code: Low-density lipoprotein receptor class A domain-containing protein 1 (205 aa).

A helical membrane pass occupies residues 43–63; it reads LLLLLATVAALIALVTILGLP. Positions 71–114 constitute an LDL-receptor class A 1 domain; the sequence is ACITLTNRTGFLCHDQRSCIPASGVCDGVRTCTHGEDEDESLCR. 6 disulfide bridges follow: Cys-72-Cys-89, Cys-83-Cys-102, Cys-96-Cys-113, Cys-141-Cys-160, Cys-163-Cys-180, and Cys-170-Cys-193. An LDL-receptor class A 2; atypical domain is found at 115 to 161; that stretch reads DVPQSLPHFLVAHCGDPASWIYSDQKCDGTNNCGDCSDELSPVTVCP. One can recognise an LDL-receptor class A 3; atypical domain in the interval 162 to 203; the sequence is PCGPGWWRCPSTFFKYCDCIPRHLCRDHVQHCSDWSDEYACP.

Belongs to the LDLR family.

Its subcellular location is the membrane. The chain is Low-density lipoprotein receptor class A domain-containing protein 1 (LDLRAD1) from Homo sapiens (Human).